The following is a 244-amino-acid chain: MKIDLNADLGEGCASDAELLTLVSSANIACGFHAGDAQTMQACVREEIKNGVAIGAHPSFPDRENFGRSAMQLPPETVYAQTLYQIGALATIARAQGGVMRHVKPHGMLYNQAAKEAQLADAIARAVYACDPALVLVGLAGSELIRAGKQYGLTTREEVFADRGYQADGSLVPRSQPGALIENEEQALAQTLEMVQHGRVKSITGEWATVAAQTVCLHGDGEHALAFARRLRATFAKKGIVVAA.

Belongs to the LamB/PxpA family. Forms a complex composed of PxpA, PxpB and PxpC.

The catalysed reaction is 5-oxo-L-proline + ATP + 2 H2O = L-glutamate + ADP + phosphate + H(+). Catalyzes the cleavage of 5-oxoproline to form L-glutamate coupled to the hydrolysis of ATP to ADP and inorganic phosphate. In Shigella flexneri serotype 5b (strain 8401), this protein is 5-oxoprolinase subunit A.